We begin with the raw amino-acid sequence, 426 residues long: Cdc25-like protein phosphatase twine (426 aa).

The segment at 1-27 is disordered; it reads MASKRLMLDVEEEDDESGACGQENFDP. Residues 265 to 371 form the Rhodanese domain; it reads SQGGYEIIDC…FFGLYSQLCQ (107 aa). Cysteine 318 is a catalytic residue.

Belongs to the MPI phosphatase family. In terms of tissue distribution, expressed in developing male and female germ cells.

It carries out the reaction O-phospho-L-tyrosyl-[protein] + H2O = L-tyrosyl-[protein] + phosphate. Its function is as follows. Required during meiosis. Regulates the transition from the extended G2 phase to the onset of the first meiotic division. This chain is Cdc25-like protein phosphatase twine (twe), found in Drosophila melanogaster (Fruit fly).